We begin with the raw amino-acid sequence, 277 residues long: MADPWQECMDYAVTLAGQAGEVVREALKNEMNIMVKSSPADLVTATDQKVEKMLITSIKEKYPSHSFIGEESVAAGEKSILTDNPTWIIDPIDGTTNFVHGFPFVAVSIGFVVNKKMEFGIVYSCLEDKMYTGRKGKGAFCNGQKLQVSHQEDITKSLLVTELGSSRTPETVRIILSNIERLLCLPIHGIRGVGTAALNMCLVAAGAADAYYEMGIHCWDVAGAGIIVTEAGGVLLDVTGGPFDLMSRRVIASSNKTLAERIAKEIQIIPLQRDDED.

Mg(2+)-binding residues include Glu70, Asp90, Ile92, and Asp93. Glu70 lines the substrate pocket. A substrate-binding site is contributed by 92–95; the sequence is IDGT. Thr168 carries the phosphothreonine modification. Residues 194–196, Glu213, and Asp220 each bind substrate; that span reads GTA. Asp220 is a Mg(2+) binding site.

Belongs to the inositol monophosphatase superfamily. In terms of assembly, homodimer. The cofactor is Mg(2+). The N-terminus is blocked.

It is found in the cytoplasm. It catalyses the reaction a myo-inositol phosphate + H2O = myo-inositol + phosphate. The enzyme catalyses 1D-myo-inositol 1-phosphate + H2O = myo-inositol + phosphate. The catalysed reaction is 1D-myo-inositol 2-phosphate + H2O = myo-inositol + phosphate. It carries out the reaction 1D-myo-inositol 3-phosphate + H2O = myo-inositol + phosphate. It catalyses the reaction 1D-myo-inositol 4-phosphate + H2O = myo-inositol + phosphate. The enzyme catalyses 1D-myo-inositol 5-phosphate + H2O = myo-inositol + phosphate. The catalysed reaction is 1D-myo-inositol 6-phosphate + H2O = myo-inositol + phosphate. It carries out the reaction scyllo-inositol 1-phosphate + H2O = scyllo-inositol + phosphate. It catalyses the reaction alpha-D-galactose 1-phosphate + H2O = D-galactose + phosphate. The enzyme catalyses alpha-D-glucose 1-phosphate + H2O = D-glucose + phosphate. The catalysed reaction is D-glucose 6-phosphate + H2O = D-glucose + phosphate. It carries out the reaction beta-D-fructose 1-phosphate + H2O = D-fructose + phosphate. It catalyses the reaction glycerol 2-phosphate + H2O = glycerol + phosphate. The enzyme catalyses adenosine 2'-phosphate + H2O = adenosine + phosphate. It participates in polyol metabolism; myo-inositol biosynthesis; myo-inositol from D-glucose 6-phosphate: step 2/2. Activity with myo-inositol monophosphate and D-galactose 1-phosphate is inhibited by Li(+), Ca(2+) and Mn(2+), but also by Mg(2+) at concentrations above 3 mM. Phosphatase involved in the dephosphorylation of myo-inositol monophosphate to generate myo-inositol. Is also able to dephosphorylate scyllo-inositol-phosphate, myo-inositol 1,4-diphosphate, scyllo-inositol-1,3-diphosphate and scyllo-inositol-1,4-diphosphate. Also dephosphorylates in vitro other sugar-phosphates including D-galactose-1-phosphate, glucose-1-phosphate, glucose-6-phosphate, fructose-1-phosphate, beta-glycerophosphate and 2'-AMP. Responsible for the provision of inositol required for synthesis of phosphatidylinositol and polyphosphoinositides, and involved in maintaining normal brain function. Has been implicated as the pharmacological target for lithium Li(+) action in brain. Is equally active with myo-inositol monophosphate and D-galactose 1-phosphate. The polypeptide is Inositol monophosphatase 1 (IMPA1) (Bos taurus (Bovine)).